We begin with the raw amino-acid sequence, 208 residues long: Large ribosomal subunit protein bL25 (208 aa).

The protein belongs to the bacterial ribosomal protein bL25 family. CTC subfamily. As to quaternary structure, part of the 50S ribosomal subunit; part of the 5S rRNA/L5/L18/L25 subcomplex. Contacts the 5S rRNA. Binds to the 5S rRNA independently of L5 and L18.

In terms of biological role, this is one of the proteins that binds to the 5S RNA in the ribosome where it forms part of the central protuberance. The polypeptide is Large ribosomal subunit protein bL25 (Burkholderia thailandensis (strain ATCC 700388 / DSM 13276 / CCUG 48851 / CIP 106301 / E264)).